The chain runs to 359 residues: Cytokine receptor-like factor 2 (359 aa).

The N-terminal stretch at 1–19 is a signal peptide; the sequence is MAWALAVILLPRLLAAAAA. Over 20-232 the chain is Extracellular; it reads AAAVTSRGDV…PAPSPALAPP (213 aa). Asparagine 53 carries N-linked (GlcNAc...) asparagine glycosylation. Cysteine 68 and cysteine 82 form a disulfide bridge. Positions 119-213 constitute a Fibronectin type-III domain; that stretch reads PPWNVTLLWT…WTAVTRLSGA (95 aa). N-linked (GlcNAc...) asparagine glycosylation occurs at asparagine 122. 2 disulfides stabilise this stretch: cysteine 168-cysteine 169 and cysteine 181-cysteine 219. A WSXWS motif motif is present at residues 201 to 205; it reads PSEWT. A helical transmembrane segment spans residues 233-253; the sequence is LLPLGCGLAALLTLSLLLAAL. The Cytoplasmic portion of the chain corresponds to 254-359; the sequence is RLRRVKDALL…MVGDSGYMTL (106 aa). The short motif at 262–270 is the Box 1 motif element; it reads LLPCVPDPS. The interval 312-336 is disordered; that stretch reads KRVEPEDGTSLCTVPRPPSFEPRGP.

Belongs to the type I cytokine receptor family. Type 5 subfamily. The TSLP receptor is a heterodimer of CRLF2 and IL7R. Binding of TSLP to CRLF2/TSLPR is a mechanistic prerequisite for recruitment of IL7R to the high-affinity ternary complex. High level of expression in liver, lung and testis. Also expressed in heart, brain, spleen, thymus and bone marrow. Highly expressed in progenitors and myeloid cells. Isoform 2 is expressed in primary hemotopoietic cells.

The protein resides in the cell membrane. It is found in the secreted. Receptor for thymic stromal lymphopoietin (TSLP). Forms a functional complex with TSLP and IL7R which is capable of stimulating cell proliferation through activation of STAT3 and STAT5. Also activates JAK2. Implicated in the development of the hematopoietic system. The chain is Cytokine receptor-like factor 2 (Crlf2) from Mus musculus (Mouse).